A 342-amino-acid chain; its full sequence is Small GTPase LIP1 (342 aa).

A small GTPase-like region spans residues K12 to N285. GTP-binding positions include G29 to T36, D90 to H94, and N160 to D163. 2 disordered regions span residues T274 to N313 and S323 to V342. Residues S323–A333 are compositionally biased toward polar residues.

The protein belongs to the small GTPase superfamily.

The protein resides in the nucleus. It is found in the cytoplasm. Its function is as follows. Functional small GTPase that acts as a negative factor controlling the light-dependent period shortening of circadian rhythms and light-induced phase resetting during the subjective night. May protect the clock from excessive or mistimed light. Suppresses red and blue light-mediated photomorphogenesis and is required for light-controlled inhibition of endoreplication and tolerance to salt stress. The entrainment of the circadian clock is independent from the other pleiotropic effects. Could be a regulator of seedling establishment. This chain is Small GTPase LIP1, found in Arabidopsis thaliana (Mouse-ear cress).